The chain runs to 414 residues: Histidine--tRNA ligase (414 aa).

The protein belongs to the class-II aminoacyl-tRNA synthetase family. Homodimer.

It localises to the cytoplasm. The enzyme catalyses tRNA(His) + L-histidine + ATP = L-histidyl-tRNA(His) + AMP + diphosphate + H(+). This is Histidine--tRNA ligase from Pelobacter propionicus (strain DSM 2379 / NBRC 103807 / OttBd1).